A 231-amino-acid polypeptide reads, in one-letter code: Maleylacetoacetate isomerase maiA (231 aa).

A GST N-terminal domain is found at 7-93 (PKVTLYTYFR…YLEEITPASS (87 aa)). One can recognise a GST C-terminal domain in the interval 102 to 224 (NPEARAVVRT…HWRTQPDTPE (123 aa)).

This sequence belongs to the GST superfamily. Zeta family.

It carries out the reaction 4-maleylacetoacetate = 4-fumarylacetoacetate. It participates in amino-acid degradation; L-phenylalanine degradation; acetoacetate and fumarate from L-phenylalanine: step 5/6. Functionally, maleylacetoacetate isomerase; part of the L-tyrosine degradation gene cluster that mediates the biosynthesis of the brownish pigment pyomelanin as an alternative melanin. The 4-hydroxyphenylpyruvate dioxygenase hppD catalyzes the conversion of 4-hydroxyphenylpyruvate to homogentisic acid (HGA). The protein hmgX is crucial for this conversion and thus, probably functions as an accessory factor to mediate specific activity of hppD. The homogentisate 1,2-dioxygenase hmgA is then involved in the cleavage of the aromatic ring of HGA and its conversion to 4-maleylacetoacetate. When hmgA activity is lowered by the cell wall integrity (CWI) signaling pathway, HGA accumulates and leads to the production of pyomelanin through benzoquinone acetic acid after oxidation and polymerization. On the opposite, in non-stress conditions, both hppD and hmgA activities are balanced and HGA is degraded into 4-maleylacetoacetate. 4-maleylacetoacetate is further converted to 4-fumarylacetoacetate by the maleylacetoacetate isomerase maiA, which is degraded into fumarate and acetoacetate by the fumarylacetoacetase fahA. The polypeptide is Maleylacetoacetate isomerase maiA (Aspergillus fumigatus (strain ATCC MYA-4609 / CBS 101355 / FGSC A1100 / Af293) (Neosartorya fumigata)).